The primary structure comprises 254 residues: Type III pantothenate kinase (254 aa).

6–13 (DVGNTNTT) provides a ligand contact to ATP. Substrate contacts are provided by residues Y100 and 107–110 (GADR). D109 acts as the Proton acceptor in catalysis. D129 lines the K(+) pocket. An ATP-binding site is contributed by T132. T184 is a substrate binding site.

This sequence belongs to the type III pantothenate kinase family. As to quaternary structure, homodimer. Requires NH4(+) as cofactor. K(+) serves as cofactor.

It is found in the cytoplasm. The catalysed reaction is (R)-pantothenate + ATP = (R)-4'-phosphopantothenate + ADP + H(+). The protein operates within cofactor biosynthesis; coenzyme A biosynthesis; CoA from (R)-pantothenate: step 1/5. Its function is as follows. Catalyzes the phosphorylation of pantothenate (Pan), the first step in CoA biosynthesis. The sequence is that of Type III pantothenate kinase from Anaeromyxobacter dehalogenans (strain 2CP-1 / ATCC BAA-258).